Consider the following 610-residue polypeptide: UvrABC system protein C (610 aa).

The region spanning 16 to 94 is the GIY-YIG domain; it reads SQPGVYRMYD…IKLYQPRYNV (79 aa). One can recognise a UVR domain in the interval 204-239; it reads DQVLTQLIARMEKASQDLAFEEAARIRDQIQAVRRV.

The protein belongs to the UvrC family. As to quaternary structure, interacts with UvrB in an incision complex.

It localises to the cytoplasm. The UvrABC repair system catalyzes the recognition and processing of DNA lesions. UvrC both incises the 5' and 3' sides of the lesion. The N-terminal half is responsible for the 3' incision and the C-terminal half is responsible for the 5' incision. The protein is UvrABC system protein C of Salmonella paratyphi A (strain ATCC 9150 / SARB42).